Here is a 50-residue protein sequence, read N- to C-terminus: Large ribosomal subunit protein bL32c (50 aa).

It belongs to the bacterial ribosomal protein bL32 family.

The protein localises to the plastid. This Euglena longa (Euglenophycean alga) protein is Large ribosomal subunit protein bL32c (rpl32).